We begin with the raw amino-acid sequence, 250 residues long: Small ribosomal subunit protein uS3 (250 aa).

Residues 39 to 107 (VRAALKKRLY…EVHLNIVEIR (69 aa)) form the KH type-2 domain. The interval 215–250 (LDKRLATESGPAGEGGGRERGDRPDRGDRRDRRDRA) is disordered. Over residues 230 to 250 (GGRERGDRPDRGDRRDRRDRA) the composition is skewed to basic and acidic residues.

Belongs to the universal ribosomal protein uS3 family. As to quaternary structure, part of the 30S ribosomal subunit. Forms a tight complex with proteins S10 and S14.

Its function is as follows. Binds the lower part of the 30S subunit head. Binds mRNA in the 70S ribosome, positioning it for translation. In Caulobacter vibrioides (strain ATCC 19089 / CIP 103742 / CB 15) (Caulobacter crescentus), this protein is Small ribosomal subunit protein uS3.